We begin with the raw amino-acid sequence, 343 residues long: MAKRQLNRRQNWRIEKIQGERAARAAKREQHALQELEGGDLGPEQLGLVIAHFGVQVEVEAQDGETAGQVFRCHLRANLPALVTGDRVVWRAGNQGIGVIVAQMPRSTELCRPNNHGQLKPVAANVDLIVIVFAPAPEPHPNLIDRYLVAAEHAGLRPLLLLNKADLINDENGPGLHALLEVYRELGYPLLEVSAHHGDGMQRLQQQLDGHISVFVGQSGVGKSSLVNSLLPDAGTRVGDLSEWSGQGTHTTTTARLYHFPNGGDLIDSPGIREFGLGHVSRDDVEDGFIEFRDLFGTCRFRDCKHDREPGCALLKALEEGRIKPQRMNSYRSIIASLAEDSY.

Positions 116-275 (HGQLKPVAAN…LIDSPGIREF (160 aa)) constitute a CP-type G domain. GTP contacts are provided by residues 163–166 (NKAD) and 217–225 (GQSGVGKSS). Cys299, Cys304, His306, and Cys312 together coordinate Zn(2+).

Belongs to the TRAFAC class YlqF/YawG GTPase family. RsgA subfamily. In terms of assembly, monomer. Associates with 30S ribosomal subunit, binds 16S rRNA. Zn(2+) serves as cofactor.

The protein localises to the cytoplasm. Its function is as follows. One of several proteins that assist in the late maturation steps of the functional core of the 30S ribosomal subunit. Helps release RbfA from mature subunits. May play a role in the assembly of ribosomal proteins into the subunit. Circularly permuted GTPase that catalyzes slow GTP hydrolysis, GTPase activity is stimulated by the 30S ribosomal subunit. This is Small ribosomal subunit biogenesis GTPase RsgA from Pseudomonas putida (strain ATCC 700007 / DSM 6899 / JCM 31910 / BCRC 17059 / LMG 24140 / F1).